A 479-amino-acid polypeptide reads, in one-letter code: Adenosylhomocysteinase (479 aa).

Residues T65, D144, and E204 each coordinate substrate. NAD(+) is bound at residue 205-207; that stretch reads TTT. Substrate is bound by residues K234 and D238. NAD(+) is bound by residues N239, 268–273, E291, N326, 347–349, and N392; these read GYGDVG and IGH.

The protein belongs to the adenosylhomocysteinase family. Requires NAD(+) as cofactor.

It is found in the cytoplasm. The enzyme catalyses S-adenosyl-L-homocysteine + H2O = L-homocysteine + adenosine. It participates in amino-acid biosynthesis; L-homocysteine biosynthesis; L-homocysteine from S-adenosyl-L-homocysteine: step 1/1. Its function is as follows. May play a key role in the regulation of the intracellular concentration of adenosylhomocysteine. The protein is Adenosylhomocysteinase of Variovorax paradoxus (strain S110).